The sequence spans 267 residues: MKKILLTNDDGYHAKGIKALEQALENMAEIYVVAPKHEKSACSQCITITAPLRAEKIKGKEGRHYRIDDGTPSDCVYLAINELFKHVCFDLVISGINLGSNMGEDTIYSGTVAGAIEGTIQGVPSIAISQILSNKNKNTPLSFDLAQKIIQDLVQNVFTKGYPLKGRKLLNVNVPNCSLQEYKGERITPKGYRLYKKEVHKRTDPKNESYFWLGLHPLKWQKRENEDRLSDFDAIASNHASITPLNLDLTSYDDLKSLESWHEGMLK.

The a divalent metal cation site is built by D9, D10, S40, and N97.

Belongs to the SurE nucleotidase family. The cofactor is a divalent metal cation.

It localises to the cytoplasm. The catalysed reaction is a ribonucleoside 5'-phosphate + H2O = a ribonucleoside + phosphate. Its function is as follows. Nucleotidase that shows phosphatase activity on nucleoside 5'-monophosphates. This chain is 5'-nucleotidase SurE, found in Helicobacter pylori (strain J99 / ATCC 700824) (Campylobacter pylori J99).